We begin with the raw amino-acid sequence, 140 residues long: MVNELSFNCEDAWLNLFVGGEMYPVQVKTLMNPTTCGSYFRDVVKVSDAAIKVRGVQWDTAPNHIKFRVDIDRDGVLFRHVLQYLRNGKLTSLPDDIFTLESLVAEAEFFGLEKYREMLKKKLWKLTGKRQYYACYEDSD.

This is an uncharacterized protein from Caenorhabditis elegans.